A 356-amino-acid polypeptide reads, in one-letter code: Histidinol-phosphate aminotransferase (356 aa).

The residue at position 214 (lysine 214) is an N6-(pyridoxal phosphate)lysine.

This sequence belongs to the class-II pyridoxal-phosphate-dependent aminotransferase family. Histidinol-phosphate aminotransferase subfamily. Homodimer. Pyridoxal 5'-phosphate is required as a cofactor.

It catalyses the reaction L-histidinol phosphate + 2-oxoglutarate = 3-(imidazol-4-yl)-2-oxopropyl phosphate + L-glutamate. The protein operates within amino-acid biosynthesis; L-histidine biosynthesis; L-histidine from 5-phospho-alpha-D-ribose 1-diphosphate: step 7/9. In Escherichia coli O127:H6 (strain E2348/69 / EPEC), this protein is Histidinol-phosphate aminotransferase.